Here is a 159-residue protein sequence, read N- to C-terminus: MIDSDGFRPNVGIILTNDVGQVLWARRINQDAWQFPQGGINDRESPEEALYRELNEEVGLEEQDVKILACTRGWLRYRLPQRLVRTHSQPLCIGQKQKWFLLRLTGAEDRVRMDLTGKPEFDGWRWVSYWYPLGQVVTFKREVYRRALKELAPRLIVRD.

A Nudix hydrolase domain is found at 6–149; the sequence is GFRPNVGIIL…KREVYRRALK (144 aa). A Nudix box motif is present at residues 38-59; that stretch reads GGINDRESPEEALYRELNEEVG.

The protein belongs to the Nudix hydrolase family. RppH subfamily. It depends on a divalent metal cation as a cofactor.

In terms of biological role, accelerates the degradation of transcripts by removing pyrophosphate from the 5'-end of triphosphorylated RNA, leading to a more labile monophosphorylated state that can stimulate subsequent ribonuclease cleavage. The sequence is that of RNA pyrophosphohydrolase from Ectopseudomonas mendocina (strain ymp) (Pseudomonas mendocina).